A 764-amino-acid chain; its full sequence is 5-methyltetrahydropteroyltriglutamate--homocysteine methyltransferase (764 aa).

5-methyltetrahydropteroyltri-L-glutamate is bound by residues Arg-16–Lys-19 and Lys-121. L-homocysteine-binding positions include Ile-440–Ser-442 and Glu-493. L-methionine-binding positions include Ile-440 to Ser-442 and Glu-493. Residues Arg-524–Cys-525 and Trp-570 each bind 5-methyltetrahydropteroyltri-L-glutamate. Residue Asp-608 participates in L-homocysteine binding. Asp-608 is an L-methionine binding site. Glu-614 lines the 5-methyltetrahydropteroyltri-L-glutamate pocket. Zn(2+)-binding residues include His-650, Cys-652, and Glu-674. The Proton donor role is filled by His-703. Cys-735 serves as a coordination point for Zn(2+).

Belongs to the vitamin-B12 independent methionine synthase family. Requires Zn(2+) as cofactor.

The enzyme catalyses 5-methyltetrahydropteroyltri-L-glutamate + L-homocysteine = tetrahydropteroyltri-L-glutamate + L-methionine. The protein operates within amino-acid biosynthesis; L-methionine biosynthesis via de novo pathway; L-methionine from L-homocysteine (MetE route): step 1/1. Functionally, catalyzes the transfer of a methyl group from 5-methyltetrahydrofolate to homocysteine resulting in methionine formation. This Burkholderia ambifaria (strain ATCC BAA-244 / DSM 16087 / CCUG 44356 / LMG 19182 / AMMD) (Burkholderia cepacia (strain AMMD)) protein is 5-methyltetrahydropteroyltriglutamate--homocysteine methyltransferase.